The chain runs to 396 residues: Multidrug resistance protein MdtL (396 aa).

Residues 1–4 (MFRY) are Cytoplasmic-facing. A helical transmembrane segment spans residues 5 to 25 (LLCCFGLVLMYPTGIDMYLVG). The Periplasmic portion of the chain corresponds to 26–41 (LPQIANQLGATEAQLH). The chain crosses the membrane as a helical span at residues 42–62 (IAFSVYLAGMATTMLFAGSLA). The Cytoplasmic segment spans residues 63-64 (DR). A helical membrane pass occupies residues 65–85 (IGRKPITLFSALLFALASYFA). Over 86–92 (ARSQSSD) the chain is Periplasmic. The chain crosses the membrane as a helical span at residues 93–113 (LFLVARFVQGVGAGCCYVVAF). Residues 114–131 (AILRDALDDKRRAKVLSM) lie on the Cytoplasmic side of the membrane. Residues 132–152 (VNGVTCIIPVIAPVIGHLIML) form a helical membrane-spanning segment. The Periplasmic segment spans residues 153–157 (RFPWP). The chain crosses the membrane as a helical span at residues 158–178 (SLFYTMAVMGLLVFGLCLFVL). Topologically, residues 179-209 (RETYSKASFHSQTLPRVQTESFKQGFFISRV) are cytoplasmic. A helical transmembrane segment spans residues 210 to 230 (VITTLGVTTILSYVNVSPMLI). Residues 231–242 (MGQMGFDRGQYS) are Periplasmic-facing. The helical transmembrane segment at 243-263 (NTMAMTALVSMLASFSTPFLL) threads the bilayer. Residues 264–277 (NQFKEKSLILFSQT) lie on the Cytoplasmic side of the membrane. 2 consecutive transmembrane segments (helical) span residues 278–298 (LFAA…GQLF) and 299–319 (NLLG…VTMS). Topologically, residues 320-333 (QALSPFVARAGVAS) are cytoplasmic. A helical transmembrane segment spans residues 334–354 (SLLGIAQVCTSALYIWVMGLL). Residues 355–360 (EVSAIN) are Periplasmic-facing. The helical transmembrane segment at 361-381 (ILLAILAVGALISITLMLAVP) threads the bilayer. Residues 382–396 (KLSEMVANEQIPESA) lie on the Cytoplasmic side of the membrane.

Belongs to the major facilitator superfamily. DHA1 family. MdtL (TC 2.A.1.2.22) subfamily.

The protein resides in the cell inner membrane. This is Multidrug resistance protein MdtL from Shewanella sp. (strain ANA-3).